We begin with the raw amino-acid sequence, 1484 residues long: Ral GTPase-activating protein subunit beta (1484 aa).

2 disordered regions span residues 355 to 437 and 699 to 728; these read PRSD…APRR and ENNL…PDSE. Ser359 carries the post-translational modification Phosphoserine. Thr363 and Thr379 each carry phosphothreonine. Polar residues-rich tracts occupy residues 369–381, 392–428, and 701–725; these read SMPQ…TTPP, NKAT…TSSE, and NLKS…PTTP. Phosphoserine occurs at positions 421 and 710. Thr724 is subject to Phosphothreonine. Residues 1138–1382 form the Rap-GAP domain; sequence IGYLDLLPCR…TTLEKEVPVI (245 aa). Phosphoserine is present on Ser1275. The segment at 1297-1325 is disordered; the sequence is PNHTDSLNSSQRLSPSSRMKKLPQGRPVP. Low complexity predominate over residues 1302–1313; it reads SLNSSQRLSPSS.

Component of the heterodimeric RalGAP1 complex with RALGAPA1 and of the heterodimeric RalGAP2 complex with RALGAPA2. Heterodimerization is required for activity. As to expression, abundantly expressed in testis, pancreas, lung, thymus, brown fat, and white fat. Expressed at lower levels in the brain.

Functionally, non-catalytic subunit of the heterodimeric RalGAP1 and RalGAP2 complexes which act as GTPase activators for the Ras-like small GTPases RALA and RALB. This is Ral GTPase-activating protein subunit beta (Ralgapb) from Mus musculus (Mouse).